A 421-amino-acid polypeptide reads, in one-letter code: Putative aspartate aminotransferase, cytoplasmic 2 (421 aa).

Lys249 is subject to N6-(pyridoxal phosphate)lysine.

Belongs to the class-I pyridoxal-phosphate-dependent aminotransferase family. In terms of assembly, homodimer. It depends on pyridoxal 5'-phosphate as a cofactor.

It is found in the cytoplasm. It catalyses the reaction L-aspartate + 2-oxoglutarate = oxaloacetate + L-glutamate. This chain is Putative aspartate aminotransferase, cytoplasmic 2 (GOT1L1), found in Homo sapiens (Human).